A 607-amino-acid chain; its full sequence is ATP-dependent DNA helicase II subunit 1 (607 aa).

A Ku domain is found at 241 to 452; sequence MDLGNDVRIG…IETMQRILRG (212 aa). The 35-residue stretch at 570-604 folds into the SAP domain; sequence IKALKVSQLKDILRDRGLRVSGKKADLLDNLTNYV.

The protein belongs to the ku70 family. As to quaternary structure, heterodimer of pku70 and pku80.

Its subcellular location is the nucleus. It localises to the chromosome. The protein resides in the telomere. It carries out the reaction ATP + H2O = ADP + phosphate + H(+). Single-stranded DNA-dependent ATP-dependent helicase. Involved in non-homologous end joining (NHEJ) DNA double strand break repair. DNA-binding is sequence-independent but has a high affinity to nicks in double-stranded DNA and to the ends of duplex DNA. Binds to naturally occurring chromosomal ends, and therefore provides chromosomal end protection. Required also for telomere recombination to repair telomeric ends in the absence of telomerase. ku70, of the ku70/ku80 heterodimer, binds to the stem loop of tlc1, the RNA component of telomerase. Required for mating-type switching. Involved in telomere maintenance. Interacts with telomeric repeats and subtelomeric sequences thereby controlling telomere length and protecting against subtelomeric rearrangement. Maintains telomeric chromatin, which is involved in silencing the expression of genes located at the telomere. This is ATP-dependent DNA helicase II subunit 1 (pku70) from Schizosaccharomyces pombe (strain 972 / ATCC 24843) (Fission yeast).